The primary structure comprises 292 residues: Small ribosomal subunit biogenesis GTPase RsgA (292 aa).

Residues 65 to 223 form the CP-type G domain; the sequence is KTELIRPTVA…VVDTPGFSSL (159 aa). GTP-binding positions include 114–117 and 165–173; these read NKLD and GPSGVGKST. Zn(2+) is bound by residues cysteine 247, cysteine 252, histidine 254, and cysteine 260.

The protein belongs to the TRAFAC class YlqF/YawG GTPase family. RsgA subfamily. As to quaternary structure, monomer. Associates with 30S ribosomal subunit, binds 16S rRNA. It depends on Zn(2+) as a cofactor.

Its subcellular location is the cytoplasm. Its function is as follows. One of several proteins that assist in the late maturation steps of the functional core of the 30S ribosomal subunit. Helps release RbfA from mature subunits. May play a role in the assembly of ribosomal proteins into the subunit. Circularly permuted GTPase that catalyzes slow GTP hydrolysis, GTPase activity is stimulated by the 30S ribosomal subunit. The protein is Small ribosomal subunit biogenesis GTPase RsgA of Alkaliphilus metalliredigens (strain QYMF).